Here is a 134-residue protein sequence, read N- to C-terminus: Large ribosomal subunit protein eL32 (134 aa).

The protein belongs to the eukaryotic ribosomal protein eL32 family.

The chain is Large ribosomal subunit protein eL32 (RpL32) from Drosophila bifasciata (Fruit fly).